The sequence spans 349 residues: Nicotinate-nucleotide--dimethylbenzimidazole phosphoribosyltransferase (349 aa).

Catalysis depends on Glu-318, which acts as the Proton acceptor.

It belongs to the CobT family.

It catalyses the reaction 5,6-dimethylbenzimidazole + nicotinate beta-D-ribonucleotide = alpha-ribazole 5'-phosphate + nicotinate + H(+). Its pathway is nucleoside biosynthesis; alpha-ribazole biosynthesis; alpha-ribazole from 5,6-dimethylbenzimidazole: step 1/2. In terms of biological role, catalyzes the synthesis of alpha-ribazole-5'-phosphate from nicotinate mononucleotide (NAMN) and 5,6-dimethylbenzimidazole (DMB). The protein is Nicotinate-nucleotide--dimethylbenzimidazole phosphoribosyltransferase of Geobacter sp. (strain M21).